We begin with the raw amino-acid sequence, 209 residues long: Thymidylate kinase (209 aa).

Position 10 to 17 (10 to 17 (GLEGAGKS)) interacts with ATP.

The protein belongs to the thymidylate kinase family.

It catalyses the reaction dTMP + ATP = dTDP + ADP. In terms of biological role, phosphorylation of dTMP to form dTDP in both de novo and salvage pathways of dTTP synthesis. This is Thymidylate kinase from Photobacterium profundum (strain SS9).